The chain runs to 122 residues: UPF0145 protein BceJ2315_57450 (122 aa).

Belongs to the UPF0145 family.

The chain is UPF0145 protein BceJ2315_57450 from Burkholderia cenocepacia (strain ATCC BAA-245 / DSM 16553 / LMG 16656 / NCTC 13227 / J2315 / CF5610) (Burkholderia cepacia (strain J2315)).